The primary structure comprises 341 residues: L-threonine 3-dehydrogenase (341 aa).

Cys38 lines the Zn(2+) pocket. Active-site charge relay system residues include Thr40 and His43. 6 residues coordinate Zn(2+): His63, Glu64, Cys93, Cys96, Cys99, and Cys107. Residues Ile175, Asp195, Arg200, Leu262–Ile264, and Ile286–Tyr287 contribute to the NAD(+) site.

It belongs to the zinc-containing alcohol dehydrogenase family. Homotetramer. It depends on Zn(2+) as a cofactor.

The protein resides in the cytoplasm. It carries out the reaction L-threonine + NAD(+) = (2S)-2-amino-3-oxobutanoate + NADH + H(+). It functions in the pathway amino-acid degradation; L-threonine degradation via oxydo-reductase pathway; glycine from L-threonine: step 1/2. Its function is as follows. Catalyzes the NAD(+)-dependent oxidation of L-threonine to 2-amino-3-ketobutyrate. The polypeptide is L-threonine 3-dehydrogenase (Yersinia enterocolitica serotype O:8 / biotype 1B (strain NCTC 13174 / 8081)).